The sequence spans 197 residues: Phosphoheptose isomerase (197 aa).

The SIS domain maps to Met34 to Gln196. Asn49–Gly51 is a binding site for substrate. Positions 58 and 62 each coordinate Zn(2+). Residues Glu62, Asn91–Asp92, Ser117–Ser119, Ser122, and Gln172 each bind substrate. Zn(2+) contacts are provided by Gln172 and His180.

Belongs to the SIS family. GmhA subfamily. Homotetramer. Zn(2+) is required as a cofactor.

The protein resides in the cytoplasm. The catalysed reaction is 2 D-sedoheptulose 7-phosphate = D-glycero-alpha-D-manno-heptose 7-phosphate + D-glycero-beta-D-manno-heptose 7-phosphate. Its pathway is carbohydrate biosynthesis; D-glycero-D-manno-heptose 7-phosphate biosynthesis; D-glycero-alpha-D-manno-heptose 7-phosphate and D-glycero-beta-D-manno-heptose 7-phosphate from sedoheptulose 7-phosphate: step 1/1. Catalyzes the isomerization of sedoheptulose 7-phosphate in D-glycero-D-manno-heptose 7-phosphate. This is Phosphoheptose isomerase from Shewanella loihica (strain ATCC BAA-1088 / PV-4).